Consider the following 241-residue polypeptide: ATP synthase subunit a (241 aa).

6 helical membrane-spanning segments follow: residues 19–39 (AVLI…AKMA), 80–100 (LVAA…IPGF), 106–126 (NINV…YEGI), 135–155 (FAHF…IEIV), 177–197 (LFLW…AYLL), and 203–223 (LLQT…AVAI).

This sequence belongs to the ATPase A chain family. As to quaternary structure, F-type ATPases have 2 components, CF(1) - the catalytic core - and CF(0) - the membrane proton channel. CF(1) has five subunits: alpha(3), beta(3), gamma(1), delta(1), epsilon(1). CF(0) has three main subunits: a(1), b(2) and c(9-12). The alpha and beta chains form an alternating ring which encloses part of the gamma chain. CF(1) is attached to CF(0) by a central stalk formed by the gamma and epsilon chains, while a peripheral stalk is formed by the delta and b chains.

The protein localises to the cell inner membrane. Functionally, key component of the proton channel; it plays a direct role in the translocation of protons across the membrane. The sequence is that of ATP synthase subunit a from Sulfurovum sp. (strain NBC37-1).